A 211-amino-acid polypeptide reads, in one-letter code: 2,3-bisphosphoglycerate-dependent phosphoglycerate mutase (211 aa).

Residues 9 to 16, 22 to 23, arginine 61, 88 to 91, lysine 99, 115 to 116, and 159 to 160 each bind substrate; these read RHGQSEWN, TG, ERDY, RR, and GN. Histidine 10 (tele-phosphohistidine intermediate) is an active-site residue. Glutamate 88 functions as the Proton donor/acceptor in the catalytic mechanism.

This sequence belongs to the phosphoglycerate mutase family. BPG-dependent PGAM subfamily. Homodimer.

It catalyses the reaction (2R)-2-phosphoglycerate = (2R)-3-phosphoglycerate. The protein operates within carbohydrate degradation; glycolysis; pyruvate from D-glyceraldehyde 3-phosphate: step 3/5. Catalyzes the interconversion of 2-phosphoglycerate and 3-phosphoglycerate. The chain is 2,3-bisphosphoglycerate-dependent phosphoglycerate mutase from Sinorhizobium fredii (strain NBRC 101917 / NGR234).